A 270-amino-acid polypeptide reads, in one-letter code: Short chain dehydrogenase/reductase dpfgG (270 aa).

NADP(+) is bound by residues Ile-18, Asp-69, Asn-96, Lys-130, Lys-171, Ile-200, and Asn-204. Lys-171 functions as the Lowers pKa of active site Tyr in the catalytic mechanism.

It belongs to the short-chain dehydrogenases/reductases (SDR) family.

It functions in the pathway secondary metabolite biosynthesis; terpenoid biosynthesis. Short chain dehydrogenase/reductase; part of the gene cluster that mediates the biosynthesis of diterpenoid pyrones. The first step of the pathway is the synthesis of the alpha-pyrone moiety by the polyketide synthase dpfgA via condensation of one acetyl-CoA starter unit with 3 malonyl-CoA units and 2 methylations. The alpha-pyrone is then combined with geranylgeranyl pyrophosphate (GGPP) formed by the GGPP synthase dpfgD through the action of the prenyltransferase dpfgC to yield a linear alpha-pyrone diterpenoid. Subsequent steps in the diterpenoid pyrone biosynthetic pathway involve the decalin core formation, which is initiated by the epoxidation of the C10-C11 olefin by the FAD-dependent oxidoreductase dpfgE, and is followed by a cyclization cascade catalyzed by the terpene cyclase dpfgB. The short chain dehydrogenase/reductase dpfgG then oxidizes the 8S hydroxy group to a ketone and the short chain dehydrogenase/reductase dpfgH reduces the ketone to the 8R hydroxy group to yield higginsianin B. Higginsianin B is further methylated by the methyltransferase dpfgI to produce the intermediate named FDDP B. The cytochrome P450 monooxygenase dfgpJ then catalyzes a three-step oxidation at C-27 to generate a carboxylic acid as well as C-26 hydroxylation. Finally, methyltransferase dpfgK methylates the carboxylic acid generated by dpfgJ, yielding the final diterpenoid pyrones from the pathway which were named FDDP D and FDDP E. This chain is Short chain dehydrogenase/reductase dpfgG, found in Gibberella zeae (strain ATCC MYA-4620 / CBS 123657 / FGSC 9075 / NRRL 31084 / PH-1) (Wheat head blight fungus).